The sequence spans 207 residues: MLRSLVQNPKVRARVLERVDEFRLNNLSNEEVWFRELTLCLLTANSSFISAYQALNCLGQKIYYANEEEIRNILKSCKYRFYNLKAKYIIMAREKVYGRLKEEIKPLADEDQQLARERLLNIKGIGMKEASHFLRNVGYFDLAIIDRHIIDFMRRIGAIGETNVKQLSKSLYISFENILKSIASNLNMSVGILDLFIWYKETNTIVK.

Catalysis depends on residues K128 and D146.

Belongs to the type-2 OGG1 family.

It carries out the reaction 2'-deoxyribonucleotide-(2'-deoxyribose 5'-phosphate)-2'-deoxyribonucleotide-DNA = a 3'-end 2'-deoxyribonucleotide-(2,3-dehydro-2,3-deoxyribose 5'-phosphate)-DNA + a 5'-end 5'-phospho-2'-deoxyribonucleoside-DNA + H(+). Functionally, catalyzes the excision of an oxidatively damaged form of guanine (7,8-dihydro-8-oxoguanine = 8-oxoG) from DNA. Also cleaves the DNA backbone at apurinic/apyrimidinic sites (AP sites). The chain is 8-oxoguanine DNA glycosylase/AP lyase from Saccharolobus solfataricus (strain ATCC 35092 / DSM 1617 / JCM 11322 / P2) (Sulfolobus solfataricus).